A 358-amino-acid polypeptide reads, in one-letter code: 3-isopropylmalate dehydrogenase (358 aa).

77–90 (GEKWDSLPRELRPE) is an NAD(+) binding site. Residues arginine 97, arginine 107, arginine 135, and aspartate 220 each contribute to the substrate site. Mg(2+)-binding residues include aspartate 220, aspartate 244, and aspartate 248. 277 to 289 (GSAPDIAGQGIAN) is a binding site for NAD(+).

This sequence belongs to the isocitrate and isopropylmalate dehydrogenases family. LeuB type 1 subfamily. Homodimer. It depends on Mg(2+) as a cofactor. Mn(2+) serves as cofactor.

The protein localises to the cytoplasm. It catalyses the reaction (2R,3S)-3-isopropylmalate + NAD(+) = 4-methyl-2-oxopentanoate + CO2 + NADH. Its pathway is amino-acid biosynthesis; L-leucine biosynthesis; L-leucine from 3-methyl-2-oxobutanoate: step 3/4. Functionally, catalyzes the oxidation of 3-carboxy-2-hydroxy-4-methylpentanoate (3-isopropylmalate) to 3-carboxy-4-methyl-2-oxopentanoate. The product decarboxylates to 4-methyl-2 oxopentanoate. This is 3-isopropylmalate dehydrogenase from Wolinella succinogenes (strain ATCC 29543 / DSM 1740 / CCUG 13145 / JCM 31913 / LMG 7466 / NCTC 11488 / FDC 602W) (Vibrio succinogenes).